The chain runs to 224 residues: Peroxiredoxin-6 (224 aa).

One can recognise a Thioredoxin domain in the interval 5–169; the sequence is LLLGDVAPNF…ILRVVISLQL (165 aa). The tract at residues 31–40 is required and sufficient for targeting to lysosomes and lamellar bodies; sequence DSWGILFSHP. Residue threonine 44 is modified to Phosphothreonine. The Cysteine sulfenic acid (-SOH) intermediate; for peroxidase activity role is filled by cysteine 47. The residue at position 63 (lysine 63) is an N6-acetyllysine. A Phosphotyrosine modification is found at tyrosine 89. The active-site For phospholipase activity is aspartate 140. Threonine 177 is modified (phosphothreonine; by MAPK). Residue lysine 209 is modified to N6-acetyllysine; alternate. Position 209 is an N6-succinyllysine; alternate (lysine 209).

Belongs to the peroxiredoxin family. Prx6 subfamily. Homodimer. Interacts with GSTP1; mediates PRDX6 glutathionylation and regeneration. Interacts with APEX1. Interacts with STH. May interact with FAM168B. May interact with HTR2A. Post-translationally, irreversibly inactivated by overoxidation of Cys-47 to sulfinic acid (Cys-SO(2)H) and sulfonic acid (Cys-SO(3)H) forms upon oxidative stress. In terms of processing, phosphorylation at Thr-177 by MAP kinases increases the phospholipase activity of the enzyme. The phosphorylated form exhibits a greater lysophosphatidylcholine acyltransferase activity compared to the non-phosphorylated form.

The protein resides in the cytoplasm. It is found in the lysosome. The enzyme catalyses a hydroperoxide + 2 glutathione = an alcohol + glutathione disulfide + H2O. It catalyses the reaction a 1,2-diacyl-sn-glycero-3-phosphocholine + H2O = a 1-acyl-sn-glycero-3-phosphocholine + a fatty acid + H(+). The catalysed reaction is a 1-acyl-sn-glycero-3-phosphocholine + an acyl-CoA = a 1,2-diacyl-sn-glycero-3-phosphocholine + CoA. It carries out the reaction 1-hexadecanoyl-sn-glycero-3-phosphocholine + hexadecanoyl-CoA = 1,2-dihexadecanoyl-sn-glycero-3-phosphocholine + CoA. The enzyme catalyses 1,2-dihexadecanoyl-sn-glycero-3-phosphocholine + H2O = 1-hexadecanoyl-sn-glycero-3-phosphocholine + hexadecanoate + H(+). Thiol-specific peroxidase that catalyzes the reduction of hydrogen peroxide and organic hydroperoxides to water and alcohols, respectively. Can reduce H(2)O(2) and short chain organic, fatty acid, and phospholipid hydroperoxides. Also has phospholipase activity, and can therefore either reduce the oxidized sn-2 fatty acyl group of phospholipids (peroxidase activity) or hydrolyze the sn-2 ester bond of phospholipids (phospholipase activity). These activities are dependent on binding to phospholipids at acidic pH and to oxidized phospholipds at cytosolic pH. Plays a role in cell protection against oxidative stress by detoxifying peroxides and in phospholipid homeostasis. Exhibits acyl-CoA-dependent lysophospholipid acyltransferase which mediates the conversion of lysophosphatidylcholine (1-acyl-sn-glycero-3-phosphocholine or LPC) into phosphatidylcholine (1,2-diacyl-sn-glycero-3-phosphocholine or PC). Shows a clear preference for LPC as the lysophospholipid and for palmitoyl CoA as the fatty acyl substrate. This chain is Peroxiredoxin-6 (PRDX6), found in Pongo abelii (Sumatran orangutan).